A 622-amino-acid chain; its full sequence is Phosphomethylpyrimidine synthase (622 aa).

Residues N226, M255, Y284, H320, 340–342 (SRG), 381–384 (DGLR), and E420 each bind substrate. H424 is a Zn(2+) binding site. A substrate-binding site is contributed by Y447. H488 is a Zn(2+) binding site. 3 residues coordinate [4Fe-4S] cluster: C568, C571, and C576.

This sequence belongs to the ThiC family. As to quaternary structure, homodimer. The cofactor is [4Fe-4S] cluster.

The enzyme catalyses 5-amino-1-(5-phospho-beta-D-ribosyl)imidazole + S-adenosyl-L-methionine = 4-amino-2-methyl-5-(phosphooxymethyl)pyrimidine + CO + 5'-deoxyadenosine + formate + L-methionine + 3 H(+). The protein operates within cofactor biosynthesis; thiamine diphosphate biosynthesis. In terms of biological role, catalyzes the synthesis of the hydroxymethylpyrimidine phosphate (HMP-P) moiety of thiamine from aminoimidazole ribotide (AIR) in a radical S-adenosyl-L-methionine (SAM)-dependent reaction. This chain is Phosphomethylpyrimidine synthase, found in Ruthia magnifica subsp. Calyptogena magnifica.